The sequence spans 182 residues: Pyruvoyl-dependent arginine decarboxylase (182 aa).

Pyruvic acid (Ser) is present on serine 44.

This sequence belongs to the PdaD family. It depends on pyruvate as a cofactor.

The enzyme catalyses L-arginine + H(+) = agmatine + CO2. In Thermoplasma volcanium (strain ATCC 51530 / DSM 4299 / JCM 9571 / NBRC 15438 / GSS1), this protein is Pyruvoyl-dependent arginine decarboxylase.